Reading from the N-terminus, the 583-residue chain is 1-deoxy-D-xylulose-5-phosphate synthase (583 aa).

Thiamine diphosphate-binding positions include histidine 74 and 115 to 117 (GHS). Aspartate 146 lines the Mg(2+) pocket. Thiamine diphosphate contacts are provided by residues 147–148 (GG), asparagine 175, phenylalanine 244, and glutamate 327. Asparagine 175 provides a ligand contact to Mg(2+).

This sequence belongs to the transketolase family. DXPS subfamily. As to quaternary structure, homodimer. Mg(2+) is required as a cofactor. Requires thiamine diphosphate as cofactor.

The enzyme catalyses D-glyceraldehyde 3-phosphate + pyruvate + H(+) = 1-deoxy-D-xylulose 5-phosphate + CO2. It participates in metabolic intermediate biosynthesis; 1-deoxy-D-xylulose 5-phosphate biosynthesis; 1-deoxy-D-xylulose 5-phosphate from D-glyceraldehyde 3-phosphate and pyruvate: step 1/1. Its function is as follows. Catalyzes the acyloin condensation reaction between C atoms 2 and 3 of pyruvate and glyceraldehyde 3-phosphate to yield 1-deoxy-D-xylulose-5-phosphate (DXP). In Myxococcus xanthus (strain DK1622), this protein is 1-deoxy-D-xylulose-5-phosphate synthase.